Here is a 370-residue protein sequence, read N- to C-terminus: Myomodulin neuropeptides 1 (370 aa).

A signal peptide spans 1-18 (MQVYMLLPLAVFASLTYQ). A propeptide spanning residues 19–50 (GACEETAAAQTSSDASTSSASSEHAENELSRA) is cleaved from the precursor. Residues 28–40 (QTSSDASTSSASS) are compositionally biased toward low complexity. Residues 28-52 (QTSSDASTSSASSEHAENELSRAKR) form a disordered region. Leu60 and Leu69 each carry leucine amide. The propeptide occupies 73–190 (GGPVEPESEE…EPEEGGLGEE (118 aa)). A leucine amide mark is found at Leu199 and Leu209. Residues 210–226 (GKREGEEGDEMDKKQDE) show a composition bias toward basic and acidic residues. The segment at 210–230 (GKREGEEGDEMDKKQDESLND) is disordered. Positions 213–237 (EGEEGDEMDKKQDESLNDDFENDDI) are excised as a propeptide. A leucine amide mark is found at Leu246, Leu256, Leu266, Leu276, Leu286, Leu296, Leu306, Leu316, Leu326, Leu336, and Leu346. Residues 344-370 (LRLGKRDDDEKEKKSLNMSRLGKRSTQ) form a disordered region. Positions 347–358 (GKRDDDEKEKKS) are enriched in basic and acidic residues. The propeptide occupies 350-355 (DDDEKE). Leu364 carries the leucine amide modification. Positions 368–370 (STQ) are excised as a propeptide.

Expressed in all ganglia of the CNS, but only in a subset of neurons including L10 in the abdominal ganglion and B16 in the buccal ganglion.

It localises to the secreted. Its function is as follows. Exogenous application of myomodulins potentiates ARC muscle contraction. This is Myomodulin neuropeptides 1 (MYOMOD1) from Aplysia californica (California sea hare).